Here is a 225-residue protein sequence, read N- to C-terminus: Large ribosomal subunit protein bL25 (225 aa).

The disordered stretch occupies residues 188–225; it reads EEIEEAEAEAQATDADTATDDSEQTSEEQAEENKEDKE. Residues 204-217 are compositionally biased toward acidic residues; that stretch reads TATDDSEQTSEEQA.

This sequence belongs to the bacterial ribosomal protein bL25 family. CTC subfamily. In terms of assembly, part of the 50S ribosomal subunit; part of the 5S rRNA/L5/L18/L25 subcomplex. Contacts the 5S rRNA. Binds to the 5S rRNA independently of L5 and L18.

In terms of biological role, this is one of the proteins that binds to the 5S RNA in the ribosome where it forms part of the central protuberance. The sequence is that of Large ribosomal subunit protein bL25 from Exiguobacterium sibiricum (strain DSM 17290 / CCUG 55495 / CIP 109462 / JCM 13490 / 255-15).